A 428-amino-acid chain; its full sequence is D-amino acid dehydrogenase (428 aa).

3–17 (VVILGSGVVGVASAY) contacts FAD.

Belongs to the DadA oxidoreductase family. FAD is required as a cofactor.

It carries out the reaction a D-alpha-amino acid + A + H2O = a 2-oxocarboxylate + AH2 + NH4(+). The protein operates within amino-acid degradation; D-alanine degradation; NH(3) and pyruvate from D-alanine: step 1/1. Oxidative deamination of D-amino acids. This is D-amino acid dehydrogenase from Burkholderia pseudomallei (strain K96243).